A 267-amino-acid chain; its full sequence is Small ribosomal subunit protein uS5 (267 aa).

The disordered stretch occupies residues 1–37 (MADEAPARSGFRGGFGSRGGRGGRGRGRGRWARGRGK). Positions 11–20 (FRGGFGSRGG) are enriched in gly residues. Residues 21–34 (RGGRGRGRGRWARG) show a composition bias toward basic residues. Ser-60 carries the post-translational modification Phosphoserine. The S5 DRBM domain maps to 85 to 148 (LKDEVLKIMP…ILAKLSVVPV (64 aa)).

Belongs to the universal ribosomal protein uS5 family.

Functionally, component of the ribosome, a large ribonucleoprotein complex responsible for the synthesis of proteins in the cell. The small ribosomal subunit (SSU) binds messenger RNAs (mRNAs) and translates the encoded message by selecting cognate aminoacyl-transfer RNA (tRNA) molecules. The large subunit (LSU) contains the ribosomal catalytic site termed the peptidyl transferase center (PTC), which catalyzes the formation of peptide bonds, thereby polymerizing the amino acids delivered by tRNAs into a polypeptide chain. The nascent polypeptides leave the ribosome through a tunnel in the LSU and interact with protein factors that function in enzymatic processing, targeting, and the membrane insertion of nascent chains at the exit of the ribosomal tunnel. Plays a role in the assembly and function of the 40S ribosomal subunit. Mutations in this protein affects the control of translational fidelity. Involved in nucleolar processing of pre-18S ribosomal RNA and ribosome assembly. Has a specific developmental role during oogenesis. The protein is Small ribosomal subunit protein uS5 (RpS2) of Drosophila melanogaster (Fruit fly).